A 281-amino-acid chain; its full sequence is Protein synthesis inhibitor I (281 aa).

Alanine 2 carries the N-acetylalanine modification. Residue glutamate 175 is part of the active site.

This sequence belongs to the ribosome-inactivating protein family. Type 1 RIP subfamily.

Its subcellular location is the cytoplasm. The catalysed reaction is Endohydrolysis of the N-glycosidic bond at one specific adenosine on the 28S rRNA.. Functionally, inhibits the elongation phase of protein synthesis. It inactivates fungal ribosomes even more effectively than mammalian ribosomes and is thought to function as a constitutive antifungal agent in plants. The sequence is that of Protein synthesis inhibitor I (RIP30) from Hordeum vulgare (Barley).